The chain runs to 511 residues: Maturase K (511 aa).

This sequence belongs to the intron maturase 2 family. MatK subfamily.

It is found in the plastid. Its subcellular location is the chloroplast. Functionally, usually encoded in the trnK tRNA gene intron. Probably assists in splicing its own and other chloroplast group II introns. In Bromelia plumieri (Karatas), this protein is Maturase K.